Consider the following 190-residue polypeptide: Ferric nitrobindin-like protein (190 aa).

The GXWXGXG signature appears at 20-26 (GNWAGAG).

Belongs to the nitrobindin family.

The polypeptide is Ferric nitrobindin-like protein (Streptomyces griseus subsp. griseus (strain JCM 4626 / CBS 651.72 / NBRC 13350 / KCC S-0626 / ISP 5235)).